Reading from the N-terminus, the 378-residue chain is O-glycoside alpha-1,2-mannosyltransferase homolog 3 (378 aa).

At 1 to 6 (MGIPKS) the chain is on the cytoplasmic side. The chain crosses the membrane as a helical; Signal-anchor for type II membrane protein span at residues 7–24 (SIYFCILLFCIISFYLQS). The Lumenal segment spans residues 25–378 (SKDGPKELKV…AIKWLENINS (354 aa)). Catalysis depends on Glu276, which acts as the Nucleophile.

The protein belongs to the glycosyltransferase 15 family.

It localises to the endoplasmic reticulum membrane. Its subcellular location is the golgi apparatus membrane. Probable mannosyltransferase involved in O-glycosylation of cell wall and secreted proteins. This chain is O-glycoside alpha-1,2-mannosyltransferase homolog 3 (omh3), found in Schizosaccharomyces pombe (strain 972 / ATCC 24843) (Fission yeast).